Here is a 198-residue protein sequence, read N- to C-terminus: Imidazoleglycerol-phosphate dehydratase (198 aa).

This sequence belongs to the imidazoleglycerol-phosphate dehydratase family.

Its subcellular location is the cytoplasm. It catalyses the reaction D-erythro-1-(imidazol-4-yl)glycerol 3-phosphate = 3-(imidazol-4-yl)-2-oxopropyl phosphate + H2O. It functions in the pathway amino-acid biosynthesis; L-histidine biosynthesis; L-histidine from 5-phospho-alpha-D-ribose 1-diphosphate: step 6/9. This Methylobacillus flagellatus (strain ATCC 51484 / DSM 6875 / VKM B-1610 / KT) protein is Imidazoleglycerol-phosphate dehydratase.